The primary structure comprises 109 residues: Large ribosomal subunit protein uL22 (109 aa).

Belongs to the universal ribosomal protein uL22 family. Part of the 50S ribosomal subunit.

Functionally, this protein binds specifically to 23S rRNA; its binding is stimulated by other ribosomal proteins, e.g. L4, L17, and L20. It is important during the early stages of 50S assembly. It makes multiple contacts with different domains of the 23S rRNA in the assembled 50S subunit and ribosome. In terms of biological role, the globular domain of the protein is located near the polypeptide exit tunnel on the outside of the subunit, while an extended beta-hairpin is found that lines the wall of the exit tunnel in the center of the 70S ribosome. This chain is Large ribosomal subunit protein uL22, found in Methylobacillus flagellatus (strain ATCC 51484 / DSM 6875 / VKM B-1610 / KT).